Consider the following 588-residue polypeptide: MIQHPRIGIRPTIDGRRQGVRESLEVQTMNMAKSVADLISSTLKYPDGEPVECVISPSTIGRVPEAAASHELFKKSNVCATITVTPCWCYGSETMDMSPDIPHAIWGFNGTERPGAVYLAAVLASHAQKGIPAFGIYGRDVQEANDTDIPEDVKEKLLRYARAALATGLMRDTAYLSMGSVSMGIGGSIVNPDFFQEYLGMRNESVDMTEFTRRMDRGIYDPEEFERAMVWVKEHIKEGVDRNREDLILSKEEKEKQWEFVIKMFMIGRDLMVGNPRLAELGFEEEAVGHHALVAGFQGQRQWTDHFPNGDFMETFLNTQFDWNGIRKPFVFATENDSLNGVSMLFNYLLTNTPQIFADVRTYWSPEAVERVTGYTLEGRAAAGFLHLINSGSCTLDGTGQATRDGKPVMKPFWELDESEVQAMLENTDFPPANREYFRGGGFSTRFLTKGDMPVTMVRLNLLKGVGPVLQIAEGYTLELPEDVHHTLDNRTDSGWPTTWFAPRLTGKGAFKSVYDVMNNWGANHGAITYGHIGADLITLASMLRIPVNMHNVPEEDIFRPKNWSLFGTEDLESADYRACQLLGPLHK.

Residues Glu335 and Asp359 each act as proton acceptor in the active site. Residues Glu335, Asp359, and His525 each contribute to the Mn(2+) site.

The protein belongs to the L-fucose isomerase family. It depends on Mn(2+) as a cofactor.

The protein resides in the cytoplasm. It catalyses the reaction L-fucose = L-fuculose. Its pathway is carbohydrate degradation; L-fucose degradation; L-lactaldehyde and glycerone phosphate from L-fucose: step 1/3. Converts the aldose L-fucose into the corresponding ketose L-fuculose. The polypeptide is L-fucose isomerase (Streptococcus pneumoniae (strain JJA)).